The primary structure comprises 517 residues: L-amino-acid oxidase (517 aa).

The first 18 residues, 1–18, serve as a signal peptide directing secretion; that stretch reads MNVFFMFSLLFLAALESC. An intrachain disulfide couples Cys-29 to Cys-192. FAD is bound by residues 62-63, 82-83, Arg-90, and 106-109; these read MA, EA, and GPMR. Position 109 (Arg-109) interacts with substrate. A glycan (N-linked (GlcNAc...) asparagine) is linked at Asn-191. Val-280 lines the FAD pocket. Cys-350 and Cys-431 are oxidised to a cystine. The N-linked (GlcNAc...) asparagine glycan is linked to Asn-380. Residue Tyr-391 coordinates substrate. FAD is bound by residues Glu-476 and 483–488; that span reads GWLDST. 483–484 is a substrate binding site; sequence GW.

It belongs to the flavin monoamine oxidase family. FIG1 subfamily. In terms of assembly, homodimer; non-covalently linked. FAD serves as cofactor. N-glycosylated. As to expression, expressed by the venom gland.

The protein resides in the secreted. It catalyses the reaction an L-alpha-amino acid + O2 + H2O = a 2-oxocarboxylate + H2O2 + NH4(+). Catalyzes an oxidative deamination of predominantly hydrophobic and aromatic L-amino acids, thus producing hydrogen peroxide that may contribute to the diverse toxic effects of this enzyme. Exhibits diverse biological activities, such as hemorrhage, hemolysis, edema, apoptosis of vascular endothelial cells or tumor cell lines, antibacterial and antiparasitic activities, as well as regulation of platelet aggregation. Effects of snake L-amino oxidases on platelets are controversial, since they either induce aggregation or inhibit agonist-induced aggregation. These different effects are probably due to different experimental conditions. The sequence is that of L-amino-acid oxidase from Notechis scutatus scutatus (Mainland tiger snake).